The primary structure comprises 468 residues: ATP synthase subunit beta (468 aa).

An ATP-binding site is contributed by Gly155–Thr162.

This sequence belongs to the ATPase alpha/beta chains family. F-type ATPases have 2 components, CF(1) - the catalytic core - and CF(0) - the membrane proton channel. CF(1) has five subunits: alpha(3), beta(3), gamma(1), delta(1), epsilon(1). CF(0) has three main subunits: a(1), b(2) and c(9-12). The alpha and beta chains form an alternating ring which encloses part of the gamma chain. CF(1) is attached to CF(0) by a central stalk formed by the gamma and epsilon chains, while a peripheral stalk is formed by the delta and b chains.

It is found in the cell membrane. It carries out the reaction ATP + H2O + 4 H(+)(in) = ADP + phosphate + 5 H(+)(out). Functionally, produces ATP from ADP in the presence of a proton gradient across the membrane. The catalytic sites are hosted primarily by the beta subunits. This is ATP synthase subunit beta from Streptococcus pyogenes serotype M1.